Here is a 156-residue protein sequence, read N- to C-terminus: MNITVLAVGTKMPRWVDEAVAEYAKRFGRDAAYAFKEIKPEKRGAGVNAVQGMAAEEKRILEAIPQGAFLVVLDERGKAPTSVELAEHLKSWRQNGEHVCFVIGGADGMTDRLKQQARMMMRLSSLTLPHGMVRVLLTEQLYRAVSILHNHPYHRE.

S-adenosyl-L-methionine-binding positions include L73, G104, and 123 to 128 (LSSLTL).

Belongs to the RNA methyltransferase RlmH family. In terms of assembly, homodimer.

It localises to the cytoplasm. The enzyme catalyses pseudouridine(1915) in 23S rRNA + S-adenosyl-L-methionine = N(3)-methylpseudouridine(1915) in 23S rRNA + S-adenosyl-L-homocysteine + H(+). In terms of biological role, specifically methylates the pseudouridine at position 1915 (m3Psi1915) in 23S rRNA. The sequence is that of Ribosomal RNA large subunit methyltransferase H from Neisseria gonorrhoeae (strain ATCC 700825 / FA 1090).